We begin with the raw amino-acid sequence, 539 residues long: Propionyl-CoA carboxylase beta chain, mitochondrial (539 aa).

A mitochondrion-targeting transit peptide spans 1–28; that stretch reads MAAAVRVTAARARLRVVVRSLHAGVRSL. The CoA carboxyltransferase N-terminal domain maps to 32–290; sequence PVSVNERIEN…SNQDPAPIRE (259 aa). Residues 32-533 are carboxyltransferase; it reads PVSVNERIEN…SKKVQRPWRK (502 aa). Serine 71 carries the post-translational modification Phosphoserine. At lysine 99 the chain carries N6-acetyllysine; alternate. Lysine 99 is modified (N6-succinyllysine; alternate). The CoA carboxyltransferase C-terminal domain occupies 294 to 533; that stretch reads PSDRLVPELD…SKKVQRPWRK (240 aa). The interval 325 to 358 is acyl-CoA binding; that stretch reads DERDFFEIMPNYAKNIIVGFARMNGRTVGIVGNQ. An N6-acetyllysine; alternate mark is found at lysine 474 and lysine 489. An N6-succinyllysine; alternate mark is found at lysine 474 and lysine 489.

The protein belongs to the AccD/PCCB family. In terms of assembly, the holoenzyme is a dodecamer composed of 6 PCCA/alpha subunits and 6 PCCB/beta subunits.

The protein localises to the mitochondrion matrix. The catalysed reaction is propanoyl-CoA + hydrogencarbonate + ATP = (S)-methylmalonyl-CoA + ADP + phosphate + H(+). It catalyses the reaction butanoyl-CoA + hydrogencarbonate + ATP = (2S)-ethylmalonyl-CoA + ADP + phosphate + H(+). It functions in the pathway metabolic intermediate metabolism; propanoyl-CoA degradation; succinyl-CoA from propanoyl-CoA: step 1/3. In terms of biological role, this is one of the 2 subunits of the biotin-dependent propionyl-CoA carboxylase (PCC), a mitochondrial enzyme involved in the catabolism of odd chain fatty acids, branched-chain amino acids isoleucine, threonine, methionine, and valine and other metabolites. Propionyl-CoA carboxylase catalyzes the carboxylation of propionyl-CoA/propanoyl-CoA to D-methylmalonyl-CoA/(S)-methylmalonyl-CoA. Within the holoenzyme, the alpha subunit catalyzes the ATP-dependent carboxylation of the biotin carried by the biotin carboxyl carrier (BCC) domain, while the beta subunit then transfers the carboxyl group from carboxylated biotin to propionyl-CoA. Propionyl-CoA carboxylase also significantly acts on butyryl-CoA/butanoyl-CoA, which is converted to ethylmalonyl-CoA/(2S)-ethylmalonyl-CoA at a much lower rate. Other alternative minor substrates include (2E)-butenoyl-CoA/crotonoyl-CoA. This is Propionyl-CoA carboxylase beta chain, mitochondrial from Sus scrofa (Pig).